Consider the following 132-residue polypeptide: Intraflagellar transport protein 20 homolog B (132 aa).

The stretch at 87 to 112 forms a coiled coil; sequence EAQQQQLYALIAEKKMQLERYRIEYD.

The protein resides in the golgi apparatus. Its subcellular location is the cis-Golgi network. It localises to the cytoplasm. The protein localises to the cytoskeleton. It is found in the microtubule organizing center. The protein resides in the centrosome. Its subcellular location is the centriole. It localises to the cell projection. The protein localises to the cilium. Functionally, involved in ciliary process assembly. May play a role in the trafficking of ciliary membrane proteins from the Golgi complex to the cilium. Regulates the platelet-derived growth factor receptor-alpha (PDGFRA) signaling pathway. Plays an important role in spermatogenesis, particularly spermiogenesis, when germ cells form flagella. The polypeptide is Intraflagellar transport protein 20 homolog B (ift20-b) (Xenopus laevis (African clawed frog)).